The following is a 389-amino-acid chain: Succinate--CoA ligase [ADP-forming] subunit beta (389 aa).

The ATP-grasp domain maps to 9–244; that stretch reads KQLLAEYGIP…KTQEDETEVT (236 aa). Residues Lys-46, 53 to 55, Gly-102, and Glu-107 each bind ATP; that span reads GRG. Mg(2+) is bound by residues Asn-199 and Asp-213. Residues Asn-264 and 321 to 323 contribute to the substrate site; that span reads GIV.

It belongs to the succinate/malate CoA ligase beta subunit family. Heterotetramer of two alpha and two beta subunits. It depends on Mg(2+) as a cofactor.

The catalysed reaction is succinate + ATP + CoA = succinyl-CoA + ADP + phosphate. It catalyses the reaction GTP + succinate + CoA = succinyl-CoA + GDP + phosphate. It functions in the pathway carbohydrate metabolism; tricarboxylic acid cycle; succinate from succinyl-CoA (ligase route): step 1/1. Succinyl-CoA synthetase functions in the citric acid cycle (TCA), coupling the hydrolysis of succinyl-CoA to the synthesis of either ATP or GTP and thus represents the only step of substrate-level phosphorylation in the TCA. The beta subunit provides nucleotide specificity of the enzyme and binds the substrate succinate, while the binding sites for coenzyme A and phosphate are found in the alpha subunit. This Xanthomonas campestris pv. campestris (strain 8004) protein is Succinate--CoA ligase [ADP-forming] subunit beta.